The sequence spans 357 residues: MQKRIAVIYGDGIGKEVITQALKILKAVAKKYEHTFIFEEVLAGGAAIDECGECLPMKSLQICKQSDSVLLGAVGGPKWDNEPSHNRPEKALLTLRKELGLFANIRPATLLPQLSKASPLKDEILNRGIDFIIVRELIGGVYFGEHKLEEINGEKVASDAMTYSASQIESIAKVAFNIARNRKKEIVCVDKANVLSSSRLWREVVDKVAQNYKDVHLSYMYVDNAAMQICRAPSQFDVILTENMFGDILSDEASIITGTIGVIPSASLSNGTLGMYEPIHGSAPDIAGQDKANPIGTILSAAMMLELSFGLTKESEVIQKAVQNALDKGYRTGDMMSEGMQLVGCEQMGDVILESVI.

76-89 (GPKWDNEPSHNRPE) is a binding site for NAD(+). 4 residues coordinate substrate: Arg-96, Arg-106, Arg-135, and Asp-223. Mg(2+) is bound by residues Asp-223, Asp-247, and Asp-251. An NAD(+)-binding site is contributed by 281–293 (GSAPDIAGQDKAN).

Belongs to the isocitrate and isopropylmalate dehydrogenases family. LeuB type 1 subfamily. As to quaternary structure, homodimer. Mg(2+) is required as a cofactor. Requires Mn(2+) as cofactor.

The protein resides in the cytoplasm. The catalysed reaction is (2R,3S)-3-isopropylmalate + NAD(+) = 4-methyl-2-oxopentanoate + CO2 + NADH. Its pathway is amino-acid biosynthesis; L-leucine biosynthesis; L-leucine from 3-methyl-2-oxobutanoate: step 3/4. Catalyzes the oxidation of 3-carboxy-2-hydroxy-4-methylpentanoate (3-isopropylmalate) to 3-carboxy-4-methyl-2-oxopentanoate. The product decarboxylates to 4-methyl-2 oxopentanoate. This chain is 3-isopropylmalate dehydrogenase, found in Helicobacter hepaticus (strain ATCC 51449 / 3B1).